We begin with the raw amino-acid sequence, 641 residues long: MGQPPLTWMLMVVVASWFITTAATNTSEARWCSECHSNATCTEDEAVTTCTCQEGFTGDGLTCVDLDECAIPGAHNCSANSSCVNTPGSFSCVCPEGFRLSPGLGCTDVDECAEPGLSHCHALATCVNVVGNYLCVCPAGYRGDGWHCECSPGSCGPGLDCVPEGDALVCADPCQAHRTLDEYWRSTEYGEGYACDTDLRGWYRFVGQGGARLAETCVPVLRCNTAAPMWLNGTHPSSDEGIVSRKACAHWSGHCCLWDASVQVKACAGGYYVYNLTAPPECHLAYCTDPSSVEGTCEECSIDEDCKSDNGRWHCQCKQDFNITDISLLEHRLECGANDMKVSLGKCQLKSLGFDKVFMYLSDSRCSGFNDRDNRDWVSVVTPARDGPCGTVLTRNETHATYSNTLYLADEIIIRDRNIKINFACSYPLDMKVSLKTSLQPVVSALNITVGGTGMFTVRMALFQNPSYTQPYQGSSVTLSTEAFLYVGTMLDGGDLSRFALLMTNCYATPSGNATDPLKYFIIQDRCPHTRDSTIQVVENGESSQGRFSVQMFRFAGNYDLVYLHCEVYLCDTMNEKCKPTCSGTRFRSGSVIDQSRVLNLGPITRKGVQATVSRAAFSSLGLLKVWLPLLLSATLTLTFQ.

The first 24 residues, 1-24 (MGQPPLTWMLMVVVASWFITTAAT), serve as a signal peptide directing secretion. N-linked (GlcNAc...) asparagine glycosylation is present at asparagine 25. The region spanning 28–64 (EARWCSECHSNATCTEDEAVTTCTCQEGFTGDGLTCV) is the EGF-like 1 domain. Intrachain disulfides connect cysteine 32/cysteine 41, cysteine 35/cysteine 50, cysteine 52/cysteine 63, cysteine 69/cysteine 83, cysteine 77/cysteine 92, cysteine 94/cysteine 106, cysteine 112/cysteine 126, cysteine 120/cysteine 135, cysteine 137/cysteine 148, cysteine 150/cysteine 161, cysteine 155/cysteine 170, cysteine 174/cysteine 267, cysteine 195/cysteine 282, cysteine 217/cysteine 255, cysteine 223/cysteine 287, cysteine 248/cysteine 256, cysteine 297/cysteine 306, cysteine 300/cysteine 315, cysteine 317/cysteine 347, cysteine 335/cysteine 425, and cysteine 366/cysteine 389. Positions 65–107 (DLDECAIPGAHNCSANSSCVNTPGSFSCVCPEGFRLSPGLGCT) constitute an EGF-like 2; calcium-binding domain. The N-linked (GlcNAc...) asparagine glycan is linked to asparagine 76. The EGF-like 3; calcium-binding domain maps to 108 to 149 (DVDECAEPGLSHCHALATCVNVVGNYLCVCPAGYRGDGWHCE). Residues 150–171 (CSPGSCGPGLDCVPEGDALVCA) are beta hairpin. The segment at 172-291 (DPCQAHRTLD…CHLAYCTDPS (120 aa)) is D10C. A glycan (N-linked (GlcNAc...) asparagine) is linked at asparagine 232. Asparagine 275 carries an N-linked (GlcNAc...) asparagine glycan. The EGF-like 4 domain occupies 292 to 323 (SVEGTCEECSIDEDCKSDNGRWHCQCKQDFNI). Asparagine 322 carries an N-linked (GlcNAc...) asparagine glycan. The segment at 334–429 (ECGANDMKVS…KINFACSYPL (96 aa)) is ZP-N. Positions 334 to 589 (ECGANDMKVS…PTCSGTRFRS (256 aa)) constitute a ZP domain. The flexible ZP-N/ZP-C linker; important for secretion and polymerization into filaments stretch occupies residues 430–453 (DMKVSLKTSLQPVVSALNITVGGT). Asparagine 447 carries an N-linked (GlcNAc...) asparagine glycan. Residues 454–464 (GMFTVRMALFQ) are internal hydrophobic patch (IHP). Residues 454–589 (GMFTVRMALF…PTCSGTRFRS (136 aa)) are ZP-C. Intrachain disulfides connect cysteine 506–cysteine 566, cysteine 527–cysteine 582, and cysteine 571–cysteine 578. The essential for cleavage by HPN stretch occupies residues 586–589 (RFRS). Residues 598 to 606 (VLNLGPITR) are external hydrophobic patch (EHP); regulates polymerization into filaments. Serine 614 is lipidated: GPI-anchor amidated serine. The propeptide at 615-641 (RAAFSSLGLLKVWLPLLLSATLTLTFQ) is removed in mature form.

As to quaternary structure, homodimer that then polymerizes into long filaments. The filaments can additionally assemble laterally to form a sheet. The filaments consist of a zigzag-shaped backbone with laterally protruding arms which interact with bacterial adhesin fimH. Two fimH molecules can bind to a single UMOD monomer. Post-translationally, N-glycosylated. Proteolytically cleaved at a conserved C-terminal proteolytic cleavage site to generate the secreted form found in urine. This cleavage is catalyzed by HPN.

It is found in the apical cell membrane. The protein resides in the basolateral cell membrane. The protein localises to the cell projection. Its subcellular location is the cilium membrane. It localises to the secreted. Functionally, functions in biogenesis and organization of the apical membrane of epithelial cells of the thick ascending limb of Henle's loop (TALH), where it promotes formation of complex filamentous gel-like structure that may play a role in the water barrier permeability. May serve as a receptor for binding and endocytosis of cytokines (IL-1, IL-2) and TNF. Facilitates neutrophil migration across renal epithelia. In the urine, may contribute to colloid osmotic pressure, retards passage of positively charged electrolytes, and inhibits formation of liquid containing supersaturated salts and subsequent formation of salt crystals. Protects against urinary tract infections by binding to type 1 fimbriated E.coli. Binds to bacterial adhesin fimH which mediates the stable formation of bacterial aggregates, prevents the binding of E.coli to uroplakins UPK1A and UPK1B which act as urothelial receptors for type I fimbriae, and allows for pathogen clearance through micturation. Also promotes aggregation of other bacteria including K.pneumoniae, P.aeruginosa and S.mitis and so may also protect against other uropathogens. The chain is Uromodulin (UMOD) from Pongo abelii (Sumatran orangutan).